Here is a 304-residue protein sequence, read N- to C-terminus: Polyisoprenyl-teichoic acid--peptidoglycan teichoic acid transferase TagU (304 aa).

At 1–3 (MKK) the chain is on the cytoplasmic side. Residues 4–24 (ALIAIGLILGTITVAIIGYGI) form a helical; Signal-anchor for type II membrane protein membrane-spanning segment. The Extracellular portion of the chain corresponds to 25-304 (YLYSSIQNTA…GELKSHLELS (280 aa)).

This sequence belongs to the LytR/CpsA/Psr (LCP) family.

It is found in the cell membrane. It participates in cell wall biogenesis. In terms of biological role, may catalyze the final step in cell wall teichoic acid biosynthesis, the transfer of the anionic cell wall polymers (APs) from their lipid-linked precursor to the cell wall peptidoglycan (PG). The chain is Polyisoprenyl-teichoic acid--peptidoglycan teichoic acid transferase TagU from Halalkalibacterium halodurans (strain ATCC BAA-125 / DSM 18197 / FERM 7344 / JCM 9153 / C-125) (Bacillus halodurans).